Consider the following 237-residue polypeptide: Ribonuclease PH (237 aa).

Phosphate-binding positions include R86 and 124 to 126 (GTR).

This sequence belongs to the RNase PH family. In terms of assembly, homohexameric ring arranged as a trimer of dimers.

It carries out the reaction tRNA(n+1) + phosphate = tRNA(n) + a ribonucleoside 5'-diphosphate. In terms of biological role, phosphorolytic 3'-5' exoribonuclease that plays an important role in tRNA 3'-end maturation. Removes nucleotide residues following the 3'-CCA terminus of tRNAs; can also add nucleotides to the ends of RNA molecules by using nucleoside diphosphates as substrates, but this may not be physiologically important. Probably plays a role in initiation of 16S rRNA degradation (leading to ribosome degradation) during starvation. The protein is Ribonuclease PH of Rhodopseudomonas palustris (strain HaA2).